The sequence spans 149 residues: Large ribosomal subunit protein bL9 (149 aa).

The protein belongs to the bacterial ribosomal protein bL9 family.

Its function is as follows. Binds to the 23S rRNA. The polypeptide is Large ribosomal subunit protein bL9 (Aliivibrio fischeri (strain ATCC 700601 / ES114) (Vibrio fischeri)).